The primary structure comprises 327 residues: COP9 signalosome complex subunit 6 (327 aa).

The MPN domain maps to valine 41–isoleucine 174. The tract at residues serine 211–phenylalanine 327 is interaction with Vpr.

The protein belongs to the peptidase M67A family. CSN6 subfamily. Component of the CSN complex, composed of COPS1/GPS1, COPS2, COPS3, COPS4, COPS5, COPS6, COPS7 (COPS7A or COPS7B), COPS8 and COPS9 isoform 1. In the complex, it probably interacts directly with COPS2, COPS4, COPS5, COPS7 (COPS7A or COPS7B) and COPS9 isoform 1. Interacts with the translation initiation factor EIF3S6. Interacts weakly with RBX1. Directly interacts with COP1 and 14-3-3 protein sigma/SFN. Interacts with ERCC6. As to quaternary structure, (Microbial infection) Interacts with the HIV-1 protein Vpr. As to expression, widely expressed.

The protein localises to the nucleus. The protein resides in the cytoplasm. It localises to the perinuclear region. Its function is as follows. Component of the COP9 signalosome complex (CSN), a complex involved in various cellular and developmental processes. The CSN complex is an essential regulator of the ubiquitin (Ubl) conjugation pathway by mediating the deneddylation of the cullin subunits of SCF-type E3 ligase complexes, leading to decrease the Ubl ligase activity of SCF-type complexes such as SCF, CSA or DDB2. The complex is also involved in phosphorylation of p53/TP53, c-jun/JUN, IkappaBalpha/NFKBIA, ITPK1 and IRF8, possibly via its association with CK2 and PKD kinases. CSN-dependent phosphorylation of TP53 and JUN promotes and protects degradation by the Ubl system, respectively. Has some glucocorticoid receptor-responsive activity. Stabilizes COP1 through reducing COP1 auto-ubiquitination and decelerating COP1 turnover rate, hence regulates the ubiquitination of COP1 targets. The sequence is that of COP9 signalosome complex subunit 6 (COPS6) from Homo sapiens (Human).